Consider the following 265-residue polypeptide: MAFNNSTIIIIIVIAFAFFLIYSQNNQPKIIQQPVPQISQFKSQLNQPQNSQHNGHLNPSIISPQLCPKCDKENCSLEQISPSRSKSPTPQITNVHIEHESDPYSDPIKKQDIYGMMDPLTFPQQRLPREVLQKYQEYYDKNGSYPPFGQNTQPLFDNPVLAGILIKQVDENEPFTDNVPSSIPLFKVKSNKNSNRFFYYIIDQRYFSKLELKIPLDSIRVNGVRYNNAEFYGIPELFDGDVIDNIALYPSNRFSVKLYKIYSFP.

A helical membrane pass occupies residues 1 to 21 (MAFNNSTIIIIIVIAFAFFLI). 2 N-linked (GlcNAc...) asparagine; by host glycosylation sites follow: asparagine 74 and asparagine 142.

The protein localises to the host membrane. It is found in the virion. This is an uncharacterized protein from Acanthamoeba polyphaga mimivirus (APMV).